Reading from the N-terminus, the 238-residue chain is Ribonuclease PH (238 aa).

Residues arginine 86 and glycine 124–arginine 126 each bind phosphate.

This sequence belongs to the RNase PH family. Homohexameric ring arranged as a trimer of dimers.

The catalysed reaction is tRNA(n+1) + phosphate = tRNA(n) + a ribonucleoside 5'-diphosphate. In terms of biological role, phosphorolytic 3'-5' exoribonuclease that plays an important role in tRNA 3'-end maturation. Removes nucleotide residues following the 3'-CCA terminus of tRNAs; can also add nucleotides to the ends of RNA molecules by using nucleoside diphosphates as substrates, but this may not be physiologically important. Probably plays a role in initiation of 16S rRNA degradation (leading to ribosome degradation) during starvation. In Actinobacillus pleuropneumoniae serotype 5b (strain L20), this protein is Ribonuclease PH.